The chain runs to 223 residues: Sigma non-opioid intracellular receptor 1 (223 aa).

Topologically, residues 1–9 are lumenal; sequence MQWAVGRRW. The interval 2-8 is targeting to endoplasmic reticulum-associated lipid droplets; the sequence is QWAVGRR. A helical membrane pass occupies residues 10-30; sequence LWVALFLAAVAVLTQIVWLWL. At 31-223 the chain is on the cytoplasmic side; sequence GTQNFVFQRE…LTTYLFGQDP (193 aa). The tract at residues 99–106 is important for ligand-binding; it reads SLSEYVLL. Residues 177–223 form a C-terminal hydrophobic region region; the sequence is VIPSTLGFALADTVFSTQDFLTLFYTLRVYARALQLELTTYLFGQDP.

Belongs to the ERG2 family. As to quaternary structure, homotrimer. Forms a ternary complex with ANK2 and ITPR3. The complex is disrupted by agonists. Interacts with KCNA4. Interacts with KCNA2; cocaine consumption leads to increased interaction. Interacts with RNF112 in an oxidative stress-regulated manner. As to expression, ubiquitously expressed with higher expression in liver, kidney and steroid-producing tissues such as placenta, ovary and adrenal gland.

It localises to the nucleus inner membrane. The protein localises to the nucleus outer membrane. It is found in the nucleus envelope. The protein resides in the cytoplasmic vesicle. Its subcellular location is the endoplasmic reticulum membrane. It localises to the membrane. The protein localises to the lipid droplet. It is found in the cell junction. The protein resides in the cell membrane. Its subcellular location is the cell projection. It localises to the growth cone. The protein localises to the postsynaptic density membrane. In terms of biological role, functions in lipid transport from the endoplasmic reticulum and is involved in a wide array of cellular functions probably through regulation of the biogenesis of lipid microdomains at the plasma membrane. Involved in the regulation of different receptors it plays a role in BDNF signaling and EGF signaling. Also regulates ion channels like the potassium channel and could modulate neurotransmitter release. Plays a role in calcium signaling through modulation together with ANK2 of the ITP3R-dependent calcium efflux at the endoplasmic reticulum. Plays a role in several other cell functions including proliferation, survival and death. Originally identified for its ability to bind various psychoactive drugs it is involved in learning processes, memory and mood alteration. Necessary for proper mitochondrial axonal transport in motor neurons, in particular the retrograde movement of mitochondria. Plays a role in protecting cells against oxidative stress-induced cell death via its interaction with RNF112. In Cavia porcellus (Guinea pig), this protein is Sigma non-opioid intracellular receptor 1 (SIGMAR1).